The sequence spans 192 residues: Probable nicotinate-nucleotide adenylyltransferase (192 aa).

This sequence belongs to the NadD family.

It catalyses the reaction nicotinate beta-D-ribonucleotide + ATP + H(+) = deamido-NAD(+) + diphosphate. It participates in cofactor biosynthesis; NAD(+) biosynthesis; deamido-NAD(+) from nicotinate D-ribonucleotide: step 1/1. Functionally, catalyzes the reversible adenylation of nicotinate mononucleotide (NaMN) to nicotinic acid adenine dinucleotide (NaAD). The sequence is that of Probable nicotinate-nucleotide adenylyltransferase from Bradyrhizobium sp. (strain BTAi1 / ATCC BAA-1182).